Consider the following 80-residue polypeptide: DNA-binding protein HU-like (80 aa).

This sequence belongs to the bacterial histone-like protein family.

In terms of biological role, histone-like DNA-binding protein which is capable of wrapping DNA to stabilize it, and thus to prevent its denaturation under extreme environmental conditions. The chain is DNA-binding protein HU-like from Rickettsia rickettsii (strain Sheila Smith).